Reading from the N-terminus, the 116-residue chain is Small ribosomal subunit protein uS10m (116 aa).

It belongs to the universal ribosomal protein uS10 family.

The protein localises to the mitochondrion. This chain is Small ribosomal subunit protein uS10m (RPS10), found in Reclinomonas americana.